Consider the following 214-residue polypeptide: Uracil phosphoribosyltransferase (214 aa).

5-phospho-alpha-D-ribose 1-diphosphate-binding positions include arginine 81, arginine 106, and 133–141; that span reads DPMLATGNS. Uracil is bound by residues isoleucine 196 and 201–203; that span reads GDA. Aspartate 202 is a binding site for 5-phospho-alpha-D-ribose 1-diphosphate.

Belongs to the UPRTase family. Mg(2+) is required as a cofactor.

The catalysed reaction is UMP + diphosphate = 5-phospho-alpha-D-ribose 1-diphosphate + uracil. It participates in pyrimidine metabolism; UMP biosynthesis via salvage pathway; UMP from uracil: step 1/1. Its activity is regulated as follows. Allosterically activated by GTP. Its function is as follows. Catalyzes the conversion of uracil and 5-phospho-alpha-D-ribose 1-diphosphate (PRPP) to UMP and diphosphate. This Legionella pneumophila subsp. pneumophila (strain Philadelphia 1 / ATCC 33152 / DSM 7513) protein is Uracil phosphoribosyltransferase.